The primary structure comprises 377 residues: Chaperone protein DnaJ (377 aa).

The region spanning 5-70 (DYYEVLGVSR…DKKAAYDQFG (66 aa)) is the J domain. A CR-type zinc finger spans residues 133–211 (GLTKELRIPT…CHGDGRVEKS (79 aa)). Zn(2+)-binding residues include C146, C149, C163, C166, C185, C188, C199, and C202. 4 CXXCXGXG motif repeats span residues 146 to 153 (CDLCEGSG), 163 to 170 (CGTCHGQG), 185 to 192 (CPTCHGRG), and 199 to 206 (CSKCHGDG).

It belongs to the DnaJ family. As to quaternary structure, homodimer. The cofactor is Zn(2+).

It localises to the cytoplasm. Participates actively in the response to hyperosmotic and heat shock by preventing the aggregation of stress-denatured proteins and by disaggregating proteins, also in an autonomous, DnaK-independent fashion. Unfolded proteins bind initially to DnaJ; upon interaction with the DnaJ-bound protein, DnaK hydrolyzes its bound ATP, resulting in the formation of a stable complex. GrpE releases ADP from DnaK; ATP binding to DnaK triggers the release of the substrate protein, thus completing the reaction cycle. Several rounds of ATP-dependent interactions between DnaJ, DnaK and GrpE are required for fully efficient folding. Also involved, together with DnaK and GrpE, in the DNA replication of plasmids through activation of initiation proteins. In Shewanella baltica (strain OS195), this protein is Chaperone protein DnaJ.